Here is a 255-residue protein sequence, read N- to C-terminus: 2,3-dehydroadipyl-CoA hydratase (255 aa).

The protein belongs to the enoyl-CoA hydratase/isomerase family.

The catalysed reaction is a (3S)-3-hydroxyacyl-CoA = a (2E)-enoyl-CoA + H2O. The enzyme catalyses a 4-saturated-(3S)-3-hydroxyacyl-CoA = a (3E)-enoyl-CoA + H2O. It functions in the pathway aromatic compound metabolism; phenylacetate degradation. In terms of biological role, catalyzes the reversible conversion of enzymatically produced 2,3-dehydroadipyl-CoA into 3-hydroxyadipyl-CoA. This Escherichia coli (strain K12) protein is 2,3-dehydroadipyl-CoA hydratase (paaF).